We begin with the raw amino-acid sequence, 156 residues long: Probable cyclic pyranopterin monophosphate synthase (156 aa).

Residues 73–75 and 109–110 each bind substrate; these read MCH and ME. D124 is a catalytic residue.

The protein belongs to the MoaC family. As to quaternary structure, homohexamer; trimer of dimers.

It catalyses the reaction (8S)-3',8-cyclo-7,8-dihydroguanosine 5'-triphosphate = cyclic pyranopterin phosphate + diphosphate. Its pathway is cofactor biosynthesis; molybdopterin biosynthesis. Catalyzes the conversion of (8S)-3',8-cyclo-7,8-dihydroguanosine 5'-triphosphate to cyclic pyranopterin monophosphate (cPMP). In Archaeoglobus fulgidus (strain ATCC 49558 / DSM 4304 / JCM 9628 / NBRC 100126 / VC-16), this protein is Probable cyclic pyranopterin monophosphate synthase.